Reading from the N-terminus, the 313-residue chain is Porphobilinogen deaminase (313 aa).

S-(dipyrrolylmethanemethyl)cysteine is present on Cys242.

It belongs to the HMBS family. As to quaternary structure, monomer. It depends on dipyrromethane as a cofactor.

The catalysed reaction is 4 porphobilinogen + H2O = hydroxymethylbilane + 4 NH4(+). It functions in the pathway porphyrin-containing compound metabolism; protoporphyrin-IX biosynthesis; coproporphyrinogen-III from 5-aminolevulinate: step 2/4. Its function is as follows. Tetrapolymerization of the monopyrrole PBG into the hydroxymethylbilane pre-uroporphyrinogen in several discrete steps. This Proteus mirabilis (strain HI4320) protein is Porphobilinogen deaminase.